The sequence spans 91 residues: Small ribosomal subunit protein uS19 (91 aa).

Belongs to the universal ribosomal protein uS19 family.

Its function is as follows. Protein S19 forms a complex with S13 that binds strongly to the 16S ribosomal RNA. This Amoebophilus asiaticus (strain 5a2) protein is Small ribosomal subunit protein uS19.